Reading from the N-terminus, the 296-residue chain is Undecaprenyl-diphosphatase (296 aa).

Transmembrane regions (helical) follow at residues 48–68 (SAFTFKIVIQLGSVFAAAWVF), 104–124 (LTLWHVLVGMIPAGILGLLFD), 131–151 (LFSVPTVMIGLLLGAFYMIFA), 167–187 (ITFFQAFVIGLSQAVAMWPGF), 208–228 (SDFTFIMAVPIMLAASLLSLV), 237–257 (SHIPFYIIGFLAAFIFGLLSI), and 272–292 (FAIYRIILVIFIAILYFGFGI).

The protein belongs to the UppP family.

Its subcellular location is the cell membrane. It carries out the reaction di-trans,octa-cis-undecaprenyl diphosphate + H2O = di-trans,octa-cis-undecaprenyl phosphate + phosphate + H(+). Functionally, catalyzes the dephosphorylation of undecaprenyl diphosphate (UPP). Confers resistance to bacitracin. The sequence is that of Undecaprenyl-diphosphatase from Staphylococcus carnosus (strain TM300).